A 461-amino-acid chain; its full sequence is MAQQSIIDTVVNLCKRRGLVYPCGEIYGGTRSAWDYGPLGVELKENIKRQWWRSMVTSRPDVVGVDTSVILPRQVWVTSGHVEVFTDPLVESLNTHKRYRADHLLEQYEEKHGHPPVNGLADINDPETGQPGNWTEPKAFSGLLKTFLGPVDDEEGLHYLRPETAQGIFVNFKNVMNTSRMKPPFGIANIGKSFRNEITPGNFIFRTREFEQMEMEFFVKPGEDEEWHQHWIDTRLQWYINLGIKPENLRLYEHPQEKLSHYSKRTVDIEYAFNFANTKWGELEGIANRTDYDLRVHSEGSGEDLSFFDQETNERWIPFVIEPAAGLGRAMMMFLMDAYHEDEAPNSKGGVDKRVVLKLDRRLAPVKVAVLPLSKKDTLTPLAEKLAAELREFWNVDYDTSGAIGRRYRRQDEIGTPFCVTVDFDSLEDNAVTVRERDTMEQVRVPLDELQGYLAQRLIGC.

Positions 100 and 163 each coordinate substrate. Residues 195–197 (RNE), 205–210 (FRTREF), 282–283 (EL), and 326–329 (GLGR) contribute to the ATP site. 210 to 214 (FEQME) is a substrate binding site. A substrate-binding site is contributed by 322-326 (EPAAG).

It belongs to the class-II aminoacyl-tRNA synthetase family. Homodimer.

It is found in the cytoplasm. The enzyme catalyses tRNA(Gly) + glycine + ATP = glycyl-tRNA(Gly) + AMP + diphosphate. Functionally, catalyzes the attachment of glycine to tRNA(Gly). The chain is Glycine--tRNA ligase from Corynebacterium glutamicum (strain ATCC 13032 / DSM 20300 / JCM 1318 / BCRC 11384 / CCUG 27702 / LMG 3730 / NBRC 12168 / NCIMB 10025 / NRRL B-2784 / 534).